Consider the following 1513-residue polypeptide: DNA topoisomerase 2-binding protein 1-A (1513 aa).

2 consecutive BRCT domains span residues 101 to 189 (VYNM…YSDV) and 194 to 283 (YLCP…MYKI). The tract at residues 289-308 (IKSVPDTSTPTGGNSKPNSR) is disordered. BRCT domains are found at residues 354–444 (APDD…IYFH), 530–621 (ADTS…SNAL), and 629–726 (EGST…SYLV). Polar residues predominate over residues 789-799 (QHNKNPQTSGG). A disordered region spans residues 789–809 (QHNKNPQTSGGESKVLQREPS). Positions 844-850 (PNQKNRT) match the Nuclear localization signal motif. Positions 892–984 (DNSKLLINVV…KRVPEALYPH (93 aa)) constitute a BRCT 6 domain. Disordered regions lie at residues 1031–1053 (ETSDDQVKKAAGDGNPQNPSKDV) and 1086–1109 (SVGRAGFDNSPCTPEGARSTRNGR). Ser1131 carries the phosphoserine modification. 2 BRCT domains span residues 1253–1344 (SKEE…DYEW) and 1383–1480 (IAEG…NYCL). The Nuclear localization signal signature appears at 1508-1511 (KRSR).

Belongs to the TOPBP1 family. Interacts with cdc45. Interacts (via BRCT domains) with ticrr; interaction is cdk2-dependent. Interacts with atr in the presence of atrip. Interacts with recql4 (via N-terminus). Interacts with gmnc. Interacts with cip2a; forming the CIP2A-TOPBP1 complex. In terms of processing, phosphorylation at Ser-1131 is essential for phosphorylation of chek1, and thus for checkpoint regulation.

Its subcellular location is the nucleus. The protein localises to the chromosome. It localises to the cytoplasm. It is found in the cytoskeleton. The protein resides in the microtubule organizing center. Its subcellular location is the centrosome. The protein localises to the spindle pole. Its function is as follows. Scaffold protein that acts as a key protein-protein adapter in DNA replication and DNA repair. Composed of multiple BRCT domains, which specifically recognize and bind phosphorylated proteins, bringing proteins together into functional combinations. Required for DNA replication initiation but not for the formation of pre-replicative complexes or the elongation stages. Necessary for the loading of replication factors onto chromatin, including gmnc, cdc45, DNA polymerases and components of the GINS complex such as ginsl/sld5. Plays a central role in DNA repair by bridging proteins and promoting recruitment of proteins to DNA damage sites. Involved in double-strand break (DSB) repair via homologous recombination in S-phase by promoting the exchange between the DNA replication factor A (RPA) complex and RAD51. Involved in microhomology-mediated end-joining (MMEJ) DNA repair by promoting recruitment of polymerase theta (POLQ) to DNA damage sites during mitosis. In response to DNA damage, triggers the recruitment of checkpoint signaling proteins on chromatin, which activate the chek1 signaling pathway and block S-phase progression. Increases the kinase activity of atr to numerous substrates, and is required for the phosphorylation of Rad1. Together with cip2a, plays an essential role in the response to genome instability generated by the presence of acentric chromosome fragments derived from shattered chromosomes within micronuclei. The CIP2A-TOPBP1 complex tethers chromosome fragments during mitosis to ensure clustered segregation of the fragments to a single daughter cell nucleus, facilitating re-ligation with limited chromosome scattering and loss. This Xenopus laevis (African clawed frog) protein is DNA topoisomerase 2-binding protein 1-A (topbp1-A).